A 185-amino-acid polypeptide reads, in one-letter code: Ribosome-recycling factor (185 aa).

Belongs to the RRF family.

The protein resides in the cytoplasm. Its function is as follows. Responsible for the release of ribosomes from messenger RNA at the termination of protein biosynthesis. May increase the efficiency of translation by recycling ribosomes from one round of translation to another. The sequence is that of Ribosome-recycling factor from Desulforapulum autotrophicum (strain ATCC 43914 / DSM 3382 / VKM B-1955 / HRM2) (Desulfobacterium autotrophicum).